A 432-amino-acid chain; its full sequence is Solute carrier family 38 member 8 (432 aa).

A run of 11 helical transmembrane segments spans residues 29-49, 59-79, 103-123, 144-164, 175-195, 215-237, 253-273, 292-312, 345-365, 368-388, and 409-429; these read AVFI…PWAF, FLVA…LGYA, LCEI…LRVI, AAQN…LSAL, ILGT…YYLW, VFSV…SIYC, LSLL…FLTF, IIVA…IVLF, LPLT…LPDL, IISI…GLCL, and GILS…VAMV.

This sequence belongs to the amino acid/polyamine transporter 2 family. In terms of tissue distribution, expressed in neurons located in the gray matter. Highly expressed in thalamus, hypothalamus, amygdala and pons. Expressed in the CA3 area of hippocampus and in the Purkinje layer of the cerebellum (at protein level). Expressed in the eye.

It localises to the membrane. The protein localises to the cytoplasm. The protein resides in the cell cortex. It is found in the cell projection. Its subcellular location is the axon. The catalysed reaction is L-glutamine(out) = L-glutamine(in). It carries out the reaction L-alanine(in) = L-alanine(out). It catalyses the reaction L-histidine(out) = L-histidine(in). The enzyme catalyses L-aspartate(out) = L-aspartate(in). The catalysed reaction is L-arginine(in) = L-arginine(out). It carries out the reaction L-leucine(in) = L-leucine(out). Electrogenic sodium-dependent amino acid transporter with a preference for L-glutamine, L-alanine, L-histidine, L-aspartate and L-arginine. May facilitate glutamine uptake in both excitatory and inhibitory neurons. The transport mechanism and stoichiometry remain to be elucidated. The chain is Solute carrier family 38 member 8 from Mus musculus (Mouse).